Reading from the N-terminus, the 826-residue chain is Villin-1 (826 aa).

The tract at residues 1–734 (MVELSKKVTG…YDELKAELGD (734 aa)) is core. One copy of the Gelsolin-like 1 repeat lies at 27–76 (MEMVPVPTKSYGNFYEGDCYVLLSTRKTGSGFSYNIHYWLGKNSSQDEQG). 112 to 119 (KQGLIYKQ) contacts a 1,2-diacyl-sn-glycero-3-phospho-(1D-myo-inositol-4,5-bisphosphate). The tract at residues 129 to 137 (VETNTYNVQ) is crucial for binding an actin filament. 138 to 146 (RLLHVKGKK) is a binding site for a 1,2-diacyl-sn-glycero-3-phospho-(1D-myo-inositol-4,5-bisphosphate). Gelsolin-like repeat units follow at residues 148 to 188 (VVAA…AERL), 265 to 309 (LVIQ…EEKQ), 408 to 457 (QELV…DELA), 528 to 568 (TKAF…DERE), and 631 to 672 (FLAT…SEKE). Residues 735–826 (NASIGQLVSG…QNLKKEKGLF (92 aa)) are headpiece. The 67-residue stretch at 760-826 (PTKLETFPLD…QNLKKEKGLF (67 aa)) folds into the HP domain. The interval 820 to 823 (KKEK) is absolutely required for activity.

It belongs to the villin/gelsolin family. As to quaternary structure, monomer. Homodimer. Associates with F-actin; the association with F-actin is inhibited by tropomyosin. Post-translationally, phosphorylated on tyrosine residues. The unphosphorylated form increases the initial rate of actin-nucleating activity, whereas the tyrosine-phosphorylated form inhibits actin-nucleating activity, enhances actin-bundling activity and enhances actin-severing activity by reducing high Ca(2+) requirements. The tyrosine-phosphorylated form does not regulate actin-capping activity. Tyrosine phosphorylation is essential for cell migration: tyrosine phosphorylation sites in the N-terminus half regulate actin reorganization and cell morphology, whereas tyrosine phosphorylation sites in the C-terminus half regulate cell migration. Tyrosine phosphorylation is induced by epidermal growth factor (EGF) and stimulates cell migration. In terms of tissue distribution, specifically expressed in epithelial cells. Component of brush border microvilli.

The protein localises to the cytoplasm. The protein resides in the cytoskeleton. It localises to the cell projection. Its subcellular location is the microvillus. It is found in the lamellipodium. The protein localises to the ruffle. The protein resides in the filopodium tip. It localises to the filopodium. Functionally, epithelial cell-specific Ca(2+)-regulated actin-modifying protein that modulates the reorganization of microvillar actin filaments. Plays a role in the actin nucleation, actin filament bundle assembly, actin filament capping and severing. Binds phosphatidylinositol 4,5-bisphosphate (PIP2) and lysophosphatidic acid (LPA); binds LPA with higher affinity than PIP2. Binding to LPA increases its phosphorylation by SRC and inhibits all actin-modifying activities. Binding to PIP2 inhibits actin-capping and -severing activities but enhances actin-bundling activity. Regulates the intestinal epithelial cell morphology, cell invasion, cell migration and apoptosis. Protects against apoptosis induced by dextran sodium sulfate (DSS) in the gastrointestinal epithelium. Appears to regulate cell death by maintaining mitochondrial integrity. Enhances hepatocyte growth factor (HGF)-induced epithelial cell motility, chemotaxis and wound repair. Its actin-bundling activity is inhibited by tropomyosin. The protein is Villin-1 (VIL1) of Gallus gallus (Chicken).